The chain runs to 103 residues: MSALTKASGSLKSVDYEVFGRVQGVCFRMYTEEEARKLGVVGWVKNTSQGTVTGQVQGPEDKVNAMKSWLSKVGSPSSRIDRTKFSNEKEISKLDFSGFSTRY.

Ser2 carries the N-acetylserine modification. Positions Ser13–Tyr103 constitute an Acylphosphatase-like domain. Catalysis depends on residues Arg28 and Asn46.

The protein belongs to the acylphosphatase family.

The enzyme catalyses an acyl phosphate + H2O = a carboxylate + phosphate + H(+). In terms of biological role, its physiological role is not yet clear. This chain is Acylphosphatase-2 (ACYP2), found in Gallus gallus (Chicken).